The chain runs to 630 residues: tRNA uridine 5-carboxymethylaminomethyl modification enzyme MnmG (630 aa).

Gly-14–Gly-19 serves as a coordination point for FAD. Position 282–296 (Gly-282–Phe-296) interacts with NAD(+).

It belongs to the MnmG family. In terms of assembly, homodimer. Heterotetramer of two MnmE and two MnmG subunits. FAD serves as cofactor.

It is found in the cytoplasm. In terms of biological role, NAD-binding protein involved in the addition of a carboxymethylaminomethyl (cmnm) group at the wobble position (U34) of certain tRNAs, forming tRNA-cmnm(5)s(2)U34. The protein is tRNA uridine 5-carboxymethylaminomethyl modification enzyme MnmG of Treponema pallidum (strain Nichols).